Consider the following 293-residue polypeptide: Neugrin (293 aa).

A signal peptide spans 1–18 (MALSLSLFLGGRVRTSLA). At Ser-41 the chain carries Phosphoserine. Disordered stretches follow at residues 177 to 210 (DEVS…EGRD) and 224 to 254 (TTAL…TLPS). The N-linked (GlcNAc...) asparagine glycan is linked to Asn-185. Basic and acidic residues predominate over residues 198–210 (HSTDAQKKREGRD).

Belongs to the neugrin family. As to quaternary structure, forms a regulatory protein-RNA complex, consisting of RCC1L, NGRN, RPUSD3, RPUSD4, TRUB2, FASTKD2 and 16S mt-rRNA. Interacts with 16S mt-rRNA; this interaction is direct. Expressed in heart, brain, liver and kidney. In brain, mainly expressed in neurons rather than glial cells.

Its subcellular location is the nucleus. The protein localises to the secreted. It localises to the mitochondrion membrane. Functionally, plays an essential role in mitochondrial ribosome biogenesis. As a component of a functional protein-RNA module, consisting of RCC1L, NGRN, RPUSD3, RPUSD4, TRUB2, FASTKD2 and 16S mitochondrial ribosomal RNA (16S mt-rRNA), controls 16S mt-rRNA abundance and is required for intra-mitochondrial translation of core subunits of the oxidative phosphorylation system. The protein is Neugrin (Ngrn) of Mus musculus (Mouse).